A 104-amino-acid chain; its full sequence is V-type ATP synthase subunit F (104 aa).

It belongs to the V-ATPase F subunit family.

Its function is as follows. Produces ATP from ADP in the presence of a proton gradient across the membrane. This chain is V-type ATP synthase subunit F, found in Thermus thermophilus (strain ATCC BAA-163 / DSM 7039 / HB27).